Reading from the N-terminus, the 392-residue chain is S-adenosylmethionine decarboxylase proenzyme (392 aa).

Residues Glu43 and Glu46 contribute to the active site. Ser100 acts as the Schiff-base intermediate with substrate; via pyruvic acid in catalysis. A Pyruvic acid (Ser); by autocatalysis modification is found at Ser100. The Proton donor; for catalytic activity role is filled by Cys114. Catalysis depends on proton acceptor; for processing activity residues Ser264 and His277.

It belongs to the eukaryotic AdoMetDC family. The cofactor is pyruvate. In terms of processing, is synthesized initially as an inactive proenzyme. Formation of the active enzyme involves a self-maturation process in which the active site pyruvoyl group is generated from an internal serine residue via an autocatalytic post-translational modification. Two non-identical subunits are generated from the proenzyme in this reaction, and the pyruvate is formed at the N-terminus of the alpha chain, which is derived from the carboxyl end of the proenzyme. The post-translation cleavage follows an unusual pathway, termed non-hydrolytic serinolysis, in which the side chain hydroxyl group of the serine supplies its oxygen atom to form the C-terminus of the beta chain, while the remainder of the serine residue undergoes an oxidative deamination to produce ammonia and the pyruvoyl group blocking the N-terminus of the alpha chain.

The catalysed reaction is S-adenosyl-L-methionine + H(+) = S-adenosyl 3-(methylsulfanyl)propylamine + CO2. The protein operates within amine and polyamine biosynthesis; S-adenosylmethioninamine biosynthesis; S-adenosylmethioninamine from S-adenosyl-L-methionine: step 1/1. In Leishmania infantum, this protein is S-adenosylmethionine decarboxylase proenzyme.